Consider the following 191-residue polypeptide: Prostaglandin-H2 D-isomerase (191 aa).

An N-terminal signal peptide occupies residues 1–24 (MGALCTLWLGLVLLGVLGALQTSA). Position 25 is a pyrrolidone carboxylic acid (Q25). N51 carries N-linked (GlcNAc...) asparagine glycosylation. The Nucleophile role is filled by C65. N78 carries an N-linked (GlcNAc...) asparagine glycan. A disulfide bridge connects residues C89 and C186.

This sequence belongs to the calycin superfamily. Lipocalin family. As to quaternary structure, monomer. Post-translationally, N- and O-glycosylated. Both N-glycosylation recognition sites are almost quantitatively occupied by N-glycans of the biantennary complex type, with a considerable proportion of structures bearing a bisecting GlcNAc. N-glycan at Asn-78: dHex1Hex5HexNAc4. Agalacto structure as well as sialylated and nonsialylated oligosaccharides bearing alpha2-3- and/or alpha2-6-linked NeuNAc are present.

The protein resides in the rough endoplasmic reticulum. The protein localises to the nucleus membrane. It is found in the golgi apparatus. It localises to the cytoplasm. Its subcellular location is the perinuclear region. The protein resides in the secreted. It catalyses the reaction prostaglandin H2 = prostaglandin D2. In terms of biological role, catalyzes the conversion of PGH2 to PGD2, a prostaglandin involved in smooth muscle contraction/relaxation and a potent inhibitor of platelet aggregation. Involved in a variety of CNS functions, such as sedation, NREM sleep and PGE2-induced allodynia, and may have an anti-apoptotic role in oligodendrocytes. Binds small non-substrate lipophilic molecules, including biliverdin, bilirubin, retinal, retinoic acid and thyroid hormone, and may act as a scavenger for harmful hydrophobic molecules and as a secretory retinoid and thyroid hormone transporter. Possibly involved in development and maintenance of the blood-brain, blood-retina, blood-aqueous humor and blood-testis barrier. It is likely to play important roles in both maturation and maintenance of the central nervous system and male reproductive system. Involved in PLA2G3-dependent maturation of mast cells. PLA2G3 is secreted by immature mast cells and acts on nearby fibroblasts upstream to PTDGS to synthesize PGD2, which in turn promotes mast cell maturation and degranulation via PTGDR. The polypeptide is Prostaglandin-H2 D-isomerase (PTGDS) (Canis lupus familiaris (Dog)).